Consider the following 151-residue polypeptide: Large ribosomal subunit protein bL9 (151 aa).

It belongs to the bacterial ribosomal protein bL9 family.

In terms of biological role, binds to the 23S rRNA. The polypeptide is Large ribosomal subunit protein bL9 (Nitrosococcus oceani (strain ATCC 19707 / BCRC 17464 / JCM 30415 / NCIMB 11848 / C-107)).